The chain runs to 92 residues: Sec-independent protein translocase protein TatA (92 aa).

The helical transmembrane segment at 1–21 (MGIFDWKHWIVILVVVVLVFG) threads the bilayer. Residues 44-92 (NDDEKPADPVVNPVPPAQPVHPQATQPITERRTFDVQAEKVEEPTRKDS) form a disordered region. Residues 72–92 (TERRTFDVQAEKVEEPTRKDS) show a composition bias toward basic and acidic residues.

It belongs to the TatA/E family. The Tat system comprises two distinct complexes: a TatABC complex, containing multiple copies of TatA, TatB and TatC subunits, and a separate TatA complex, containing only TatA subunits. Substrates initially bind to the TatABC complex, which probably triggers association of the separate TatA complex to form the active translocon.

The protein localises to the cell inner membrane. Part of the twin-arginine translocation (Tat) system that transports large folded proteins containing a characteristic twin-arginine motif in their signal peptide across membranes. TatA could form the protein-conducting channel of the Tat system. In Pseudomonas fluorescens (strain SBW25), this protein is Sec-independent protein translocase protein TatA.